A 60-amino-acid chain; its full sequence is Large ribosomal subunit protein bL32 (60 aa).

Belongs to the bacterial ribosomal protein bL32 family.

The chain is Large ribosomal subunit protein bL32 from Moorella thermoacetica (strain ATCC 39073 / JCM 9320).